The following is a 143-amino-acid chain: NADH-quinone oxidoreductase subunit A (143 aa).

The next 3 helical transmembrane spans lie at 8–28 (FGNVFAFLALGIVFVAGGYLT), 63–83 (FYVVALIFIIFDVEVVFLYPW), and 90–110 (LGVFALVEVLVFAGILILGLV).

This sequence belongs to the complex I subunit 3 family. As to quaternary structure, NDH-1 is composed of 14 different subunits. Subunits NuoA, H, J, K, L, M, N constitute the membrane sector of the complex.

The protein resides in the cell inner membrane. The catalysed reaction is a quinone + NADH + 5 H(+)(in) = a quinol + NAD(+) + 4 H(+)(out). Its function is as follows. NDH-1 shuttles electrons from NADH, via FMN and iron-sulfur (Fe-S) centers, to quinones in the respiratory chain. The immediate electron acceptor for the enzyme in this species is believed to be a menaquinone. Couples the redox reaction to proton translocation (for every two electrons transferred, four hydrogen ions are translocated across the cytoplasmic membrane), and thus conserves the redox energy in a proton gradient. The chain is NADH-quinone oxidoreductase subunit A from Chlorobium phaeobacteroides (strain DSM 266 / SMG 266 / 2430).